Here is a 174-residue protein sequence, read N- to C-terminus: Adenine phosphoribosyltransferase (174 aa).

The protein belongs to the purine/pyrimidine phosphoribosyltransferase family. Homodimer.

It localises to the cytoplasm. The enzyme catalyses AMP + diphosphate = 5-phospho-alpha-D-ribose 1-diphosphate + adenine. It functions in the pathway purine metabolism; AMP biosynthesis via salvage pathway; AMP from adenine: step 1/1. Its function is as follows. Catalyzes a salvage reaction resulting in the formation of AMP, that is energically less costly than de novo synthesis. In Photobacterium profundum (strain SS9), this protein is Adenine phosphoribosyltransferase.